Reading from the N-terminus, the 249-residue chain is Structural protein VP10 (249 aa).

It is found in the virion. Functionally, forms the virion spike 'foot' and helps anchor the VP9 spike 'head' protein in the virion. The sequence is that of Structural protein VP10 (Segment-10) from Banna virus (BAV).